Here is a 503-residue protein sequence, read N- to C-terminus: Mitogen-activated protein kinase kinae mkk2 (503 aa).

The segment at 1 to 130 (MSSSPVPLLR…ASGPASASSS (130 aa)) is disordered. The segment covering 53-66 (APQPQRPSTRPAPP) has biased composition (pro residues). The segment covering 100-115 (TGLNESTGHSRSSSFT) has biased composition (polar residues). Residues 121-130 (ASGPASASSS) show a composition bias toward low complexity. The 271-residue stretch at 211-481 (IIELGSLGEG…PWRMLEHPWM (271 aa)) folds into the Protein kinase domain. ATP contacts are provided by residues 217 to 225 (LGEGAGGAV) and Lys-240. The active-site Proton acceptor is the Asp-338.

Belongs to the protein kinase superfamily. STE Ser/Thr protein kinase family. MAP kinase kinase subfamily.

It catalyses the reaction L-seryl-[protein] + ATP = O-phospho-L-seryl-[protein] + ADP + H(+). It carries out the reaction L-threonyl-[protein] + ATP = O-phospho-L-threonyl-[protein] + ADP + H(+). In terms of biological role, mitogen-activated kinase kinase (MAPKK), part of the cell wall integrity (CWI) signaling pathway composed by three protein kinases bck1, mkk2 and mpkA and responsible for the maintaining of cell-wall integrity balance. The CWI pathway also regulates the oxidative stress response, as well as the production of some secondary metabolites including pyomelanin. The protein is Mitogen-activated protein kinase kinae mkk2 of Aspergillus fumigatus (strain CBS 144.89 / FGSC A1163 / CEA10) (Neosartorya fumigata).